We begin with the raw amino-acid sequence, 513 residues long: 2,3-bisphosphoglycerate-independent phosphoglycerate mutase (513 aa).

Residues D13 and S63 each contribute to the Mn(2+) site. S63 (phosphoserine intermediate) is an active-site residue. Residues H124, R154 to D155, R186, R192, R262 to R265, and K335 each bind substrate. Positions 402, 406, 443, 444, and 462 each coordinate Mn(2+).

This sequence belongs to the BPG-independent phosphoglycerate mutase family. As to quaternary structure, monomer. The cofactor is Mn(2+).

It catalyses the reaction (2R)-2-phosphoglycerate = (2R)-3-phosphoglycerate. It participates in carbohydrate degradation; glycolysis; pyruvate from D-glyceraldehyde 3-phosphate: step 3/5. In terms of biological role, catalyzes the interconversion of 2-phosphoglycerate and 3-phosphoglycerate. This chain is 2,3-bisphosphoglycerate-independent phosphoglycerate mutase, found in Shewanella frigidimarina (strain NCIMB 400).